The following is a 766-amino-acid chain: FYVE, RhoGEF and PH domain-containing protein 4 (766 aa).

Disordered regions lie at residues 1–20 (MEEIKPASASCVSKEKPSKV), 46–83 (NLNAPRTPGRHGLTTTPQQKLLSQHLPQRQGNDTDKTQ), and 134–188 (ETAT…ESPL). The interval 1–150 (MEEIKPASAS…SPTTDSCDGN (150 aa)) is actin filament-binding. Polar residues-rich tracts occupy residues 58-83 (LTTTPQQKLLSQHLPQRQGNDTDKTQ) and 145-157 (DSCDGNASDSSYR). The segment covering 167–184 (LEERGAETETKVQERENG) has biased composition (basic and acidic residues). Residues 206 to 393 (KLHKIANELL…STAASHSNSA (188 aa)) enclose the DH domain. One can recognise a PH 1 domain in the interval 422–521 (ELIKEGQILK…WIKALQETID (100 aa)). An FYVE-type zinc finger spans residues 559-619 (DNEVTMCMKC…VCKDCYQIIS (61 aa)). The Zn(2+) site is built by cysteine 565, cysteine 568, cysteine 582, cysteine 585, cysteine 590, cysteine 593, cysteine 611, and cysteine 614. The PH 2 domain maps to 643–740 (NSVVCSFLQY…WLKVILLAVT (98 aa)). Phosphoserine is present on residues serine 702 and serine 716. The segment at 742 to 766 (ETPGGPNEHPATLDDHPEPKKKSEC) is disordered. Residues 752–766 (ATLDDHPEPKKKSEC) show a composition bias toward basic and acidic residues.

In terms of assembly, homooligomer. In terms of tissue distribution, expressed in different tissues, including brain, cerebellum, peripheral nerve, skeletal muscle, heart, uterus, placenta and testis.

The protein resides in the cytoplasm. It is found in the cytoskeleton. The protein localises to the cell projection. It localises to the filopodium. Activates CDC42, a member of the Ras-like family of Rho- and Rac proteins, by exchanging bound GDP for free GTP. Plays a role in regulating the actin cytoskeleton and cell shape. Activates MAPK8. This is FYVE, RhoGEF and PH domain-containing protein 4 (FGD4) from Homo sapiens (Human).